A 594-amino-acid polypeptide reads, in one-letter code: UvrABC system protein C (594 aa).

The 87-residue stretch at 13 to 99 (SSSGVYQYFD…IKQLKPKYNI (87 aa)) folds into the GIY-YIG domain. In terms of domain architecture, UVR spans 205-240 (DRLIKELELKMERLSSNLRFEEALIYRDRIAKIQKI).

The protein belongs to the UvrC family. Interacts with UvrB in an incision complex.

It localises to the cytoplasm. The UvrABC repair system catalyzes the recognition and processing of DNA lesions. UvrC both incises the 5' and 3' sides of the lesion. The N-terminal half is responsible for the 3' incision and the C-terminal half is responsible for the 5' incision. The chain is UvrABC system protein C from Helicobacter pylori (strain J99 / ATCC 700824) (Campylobacter pylori J99).